A 736-amino-acid chain; its full sequence is Meiotic expression up-regulated protein 27 (736 aa).

Belongs to the UPF0300 family.

This is Meiotic expression up-regulated protein 27 (meu27) from Schizosaccharomyces pombe (strain 972 / ATCC 24843) (Fission yeast).